Consider the following 353-residue polypeptide: Guanine nucleotide-binding protein alpha-1 subunit (353 aa).

The segment at 1–26 (MGCGMSTEEKEGKARNEEIENQLKRD) is disordered. G2 carries N-myristoyl glycine lipidation. A lipid anchor (S-palmitoyl cysteine) is attached at C3. Basic and acidic residues predominate over residues 7 to 26 (TEEKEGKARNEEIENQLKRD). The region spanning 32-353 (NEIKMLLLGA…QENLRLCGLI (322 aa)) is the G-alpha domain. The tract at residues 35 to 48 (KMLLLGAGESGKST) is G1 motif. Positions 43, 44, 45, 46, 47, 48, 150, 175, 181, 203, 269, 270, 272, and 325 each coordinate GTP. S47 is a Mg(2+) binding site. The segment at 173 to 181 (DVLRSRVKT) is G2 motif. Residue T181 participates in Mg(2+) binding. The tract at residues 196 to 205 (YRMFDVGGQR) is G3 motif. The tract at residues 265 to 272 (ILFLNKID) is G4 motif. Residues 323-328 (TCATDT) are G5 motif.

Belongs to the G-alpha family. G(q) subfamily. In terms of assembly, g proteins are composed of 3 units; alpha, beta and gamma. The alpha chain contains the guanine nucleotide binding site. Requires Mg(2+) as cofactor.

In terms of biological role, guanine nucleotide-binding proteins (G proteins) are involved as modulators or transducers in various transmembrane signaling systems. The chain is Guanine nucleotide-binding protein alpha-1 subunit (gna-1) from Neurospora crassa (strain ATCC 24698 / 74-OR23-1A / CBS 708.71 / DSM 1257 / FGSC 987).